The following is a 530-amino-acid chain: Tegument protein UL21 homolog (530 aa).

This sequence belongs to the alphaherpesvirinae UL21 protein family. In terms of assembly, interacts (via C-terminus) with UL16.

The protein resides in the virion tegument. Its subcellular location is the host cytoplasm. The protein localises to the host nucleus. Its function is as follows. May participate in DNA packaging/capsid maturation events. Promotes efficient incorporation of tegument proteins UL46, UL49, and US3 homologs into virions. May also play a role in capsid transport to the trans-Golgi network (TGN). This Equus caballus (Horse) protein is Tegument protein UL21 homolog.